The primary structure comprises 96 residues: uncharacterized protein (96 aa).

Transmembrane regions (helical) follow at residues 27–47 (LYTV…FFFF) and 52–72 (MSAG…RPTI).

It localises to the cell membrane. This is an uncharacterized protein from Bacillus subtilis (strain 168).